Reading from the N-terminus, the 567-residue chain is Periplasmic [NiFe] hydrogenase large subunit (567 aa).

A Mg(2+)-binding site is contributed by E62. Ni(2+) is bound by residues C81 and C84. C84 contacts Fe cation. A Mg(2+)-binding site is contributed by L498. C546 and C549 together coordinate Ni(2+). C549 provides a ligand contact to Fe cation. Position 552 (H552) interacts with Mg(2+). Residues 553–567 (VIDGHTNEVHKFRIL) constitute a propeptide that is removed on maturation.

Belongs to the [NiFe]/[NiFeSe] hydrogenase large subunit family. As to quaternary structure, heterodimer of a large and a small subunit. The cofactor is Ni(2+). Fe cation is required as a cofactor.

The protein resides in the periplasm. The catalysed reaction is 2 Fe(III)-[cytochrome c3] + H2 = 2 Fe(II)-[cytochrome c3] + 2 H(+). In terms of biological role, catalyzes the reversible oxidoreduction of molecular hydrogen, in conjunction with a specific electron acceptor, cytochrome c3. The sequence is that of Periplasmic [NiFe] hydrogenase large subunit (hydB) from Nitratidesulfovibrio vulgaris (strain DSM 19637 / Miyazaki F) (Desulfovibrio vulgaris).